A 37-amino-acid polypeptide reads, in one-letter code: Large ribosomal subunit protein bL36c (37 aa).

It belongs to the bacterial ribosomal protein bL36 family.

It localises to the plastid. The protein resides in the chloroplast. The polypeptide is Large ribosomal subunit protein bL36c (Phalaenopsis aphrodite subsp. formosana (Moth orchid)).